Here is a 152-residue protein sequence, read N- to C-terminus: Probable flagellum biosynthesis repressor protein FlbT (152 aa).

This sequence belongs to the FlbT family.

Functionally, has a post-transcriptional repressor function in flagellum biogenesis. Associates with the 5'-UTR of fljK mRNA and promotes its degradation. This Brucella canis (strain ATCC 23365 / NCTC 10854 / RM-666) protein is Probable flagellum biosynthesis repressor protein FlbT.